A 282-amino-acid chain; its full sequence is NADPH-dependent 7-cyano-7-deazaguanine reductase (282 aa).

88–90 (IES) contacts substrate. 90–91 (SK) contributes to the NADPH binding site. The active-site Thioimide intermediate is Cys190. Asp197 (proton donor) is an active-site residue. Residue 229–230 (HE) coordinates substrate. Residue 258–259 (RG) participates in NADPH binding.

This sequence belongs to the GTP cyclohydrolase I family. QueF type 2 subfamily. Homodimer.

It is found in the cytoplasm. It carries out the reaction 7-aminomethyl-7-carbaguanine + 2 NADP(+) = 7-cyano-7-deazaguanine + 2 NADPH + 3 H(+). It functions in the pathway tRNA modification; tRNA-queuosine biosynthesis. Catalyzes the NADPH-dependent reduction of 7-cyano-7-deazaguanine (preQ0) to 7-aminomethyl-7-deazaguanine (preQ1). The chain is NADPH-dependent 7-cyano-7-deazaguanine reductase from Escherichia coli (strain SMS-3-5 / SECEC).